A 428-amino-acid chain; its full sequence is Trigger factor (428 aa).

One can recognise a PPIase FKBP-type domain in the interval 163–248; that stretch reads GDTAVIDFEG…VHEVKAKQLP (86 aa).

Belongs to the FKBP-type PPIase family. Tig subfamily.

It localises to the cytoplasm. The enzyme catalyses [protein]-peptidylproline (omega=180) = [protein]-peptidylproline (omega=0). Functionally, involved in protein export. Acts as a chaperone by maintaining the newly synthesized protein in an open conformation. Functions as a peptidyl-prolyl cis-trans isomerase. This Geobacillus thermodenitrificans (strain NG80-2) protein is Trigger factor.